We begin with the raw amino-acid sequence, 182 residues long: NADH-quinone oxidoreductase subunit I (182 aa).

4Fe-4S ferredoxin-type domains follow at residues 52–82 and 92–121; these read LTRDPDGEERCVACNLCAVACPVGCISLQKA and EFFRINFSRCIFCGLCEEACPTTAIQLTPD. Cys62, Cys65, Cys68, Cys72, Cys101, Cys104, Cys107, and Cys111 together coordinate [4Fe-4S] cluster.

This sequence belongs to the complex I 23 kDa subunit family. As to quaternary structure, NDH-1 is composed of 13 different subunits. Subunits NuoA, H, J, K, L, M, N constitute the membrane sector of the complex. Requires [4Fe-4S] cluster as cofactor.

The protein resides in the cell inner membrane. It carries out the reaction a quinone + NADH + 5 H(+)(in) = a quinol + NAD(+) + 4 H(+)(out). Its function is as follows. NDH-1 shuttles electrons from NADH, via FMN and iron-sulfur (Fe-S) centers, to quinones in the respiratory chain. The immediate electron acceptor for the enzyme in this species is believed to be ubiquinone. Couples the redox reaction to proton translocation (for every two electrons transferred, four hydrogen ions are translocated across the cytoplasmic membrane), and thus conserves the redox energy in a proton gradient. The chain is NADH-quinone oxidoreductase subunit I from Pseudomonas entomophila (strain L48).